Consider the following 298-residue polypeptide: MDQKQIEEIVRSVMASMGQDVPQPVAPSTQEGAKPQCAAPTVTESCALDLGSAEAKAWIGVENPHRADVLTELRRSTAARVCTGRAGPRPRTQALLRFLADHSRSKDTVLKEVPEEWGKAQGLLEVRSEISDKNLYLTRPDMGRRLSPEAIDALKSQCVMNPDVQVVVSDGLSTDAITANYEEILPPLLAGLKQAGLNVGTPFFVRYGRVKIEDQIGEILGAKVVILLVGERPGLGQSESLSCYAVYSPRVATTVEADRTCISNIHQGGTPPVEAAAVIVDLAKRMLEQKASGINMTR.

Valine 210, glutamate 231, and cysteine 261 together coordinate adenosylcob(III)alamin.

The protein belongs to the EutC family. In terms of assembly, the basic unit is a heterodimer which dimerizes to form tetramers. The heterotetramers trimerize; 6 large subunits form a core ring with 6 small subunits projecting outwards. The cofactor is adenosylcob(III)alamin.

It is found in the bacterial microcompartment. The enzyme catalyses ethanolamine = acetaldehyde + NH4(+). It participates in amine and polyamine degradation; ethanolamine degradation. In terms of biological role, catalyzes the deamination of various vicinal amino-alcohols to oxo compounds. Allows this organism to utilize ethanolamine as the sole source of nitrogen and carbon in the presence of external vitamin B12. This is Ethanolamine ammonia-lyase small subunit from Salmonella typhi.